Consider the following 323-residue polypeptide: Protein translocase subunit SecF (323 aa).

A run of 6 helical transmembrane segments spans residues 19–39 (GVIV…FKGF), 138–158 (ILSL…RYEW), 162–182 (LASV…VIVF), 189–209 (EVIA…IIIF), 244–264 (LTVF…IIGF), and 269–289 (LIGT…VALL).

This sequence belongs to the SecD/SecF family. SecF subfamily. Forms a complex with SecD. Part of the essential Sec protein translocation apparatus which comprises SecA, SecYEG and auxiliary proteins SecDF-YajC and YidC.

The protein resides in the cell inner membrane. Part of the Sec protein translocase complex. Interacts with the SecYEG preprotein conducting channel. SecDF uses the proton motive force (PMF) to complete protein translocation after the ATP-dependent function of SecA. The sequence is that of Protein translocase subunit SecF from Helicobacter pylori (strain ATCC 700392 / 26695) (Campylobacter pylori).